The following is a 262-amino-acid chain: Hemin import ATP-binding protein HmuV (262 aa).

Positions 3-244 (LQARNLTLAR…DHMRRVYGIE (242 aa)) constitute an ABC transporter domain. An ATP-binding site is contributed by 35–42 (GANGAGKS).

It belongs to the ABC transporter superfamily. Heme (hemin) importer (TC 3.A.1.14.5) family. As to quaternary structure, the complex is composed of two ATP-binding proteins (HmuV), two transmembrane proteins (HmuU) and a solute-binding protein (HmuT).

Its subcellular location is the cell inner membrane. Its function is as follows. Part of the ABC transporter complex HmuTUV involved in hemin import. Responsible for energy coupling to the transport system. The sequence is that of Hemin import ATP-binding protein HmuV from Bordetella parapertussis (strain 12822 / ATCC BAA-587 / NCTC 13253).